The primary structure comprises 83 residues: RNA-binding protein Hfq (83 aa).

The 61-residue stretch at 9–69 (DQLLNTARKE…ISTIIPAKPI (61 aa)) folds into the Sm domain.

Belongs to the Hfq family. As to quaternary structure, homohexamer.

Its function is as follows. RNA chaperone that binds small regulatory RNA (sRNAs) and mRNAs to facilitate mRNA translational regulation in response to envelope stress, environmental stress and changes in metabolite concentrations. Also binds with high specificity to tRNAs. The polypeptide is RNA-binding protein Hfq (Leptospira biflexa serovar Patoc (strain Patoc 1 / Ames)).